A 340-amino-acid polypeptide reads, in one-letter code: Erlin-2 (340 aa).

Residues Met-1–Gln-3 lie on the Cytoplasmic side of the membrane. Residues Leu-4–His-24 traverse the membrane as a helical segment. Topologically, residues Lys-25–Asn-340 are lumenal. Asn-106 carries an N-linked (GlcNAc...) asparagine glycan. The interaction with ERLIN1 stretch occupies residues Glu-177–Ala-309. At Lys-267 the chain carries N6-acetyllysine.

This sequence belongs to the band 7/mec-2 family. As to quaternary structure, forms a heteromeric complex with ERLIN1. In complex with ERLIN1, interacts with RNF170. Interacts with activated ITPR1, independently of the degree of ITPR1 polyubiquitination. Interacts with SCAP, INSIG1, SREBF1 and SREBF2 under cholesterol sufficiency conditions; indicative for an association with the SCAP-SREBP-INSIG complex. Probably part of an AMFR/gp78 and INSIG1-containing ubiquitin ligase complex involved in ERAD of HMGCR. Interacts with TMUB1; TMUB1 bridges the association with AMFR. Interacts with SYVN1 and RNF139. Interacts with TMEM259. Interacts with TMEM41B. Deubiquitinated by USP25; leading to stabilization.

It is found in the endoplasmic reticulum membrane. Component of the ERLIN1/ERLIN2 complex which mediates the endoplasmic reticulum-associated degradation (ERAD) of inositol 1,4,5-trisphosphate receptors (IP3Rs) such as ITPR1. Promotes sterol-accelerated ERAD of HMGCR probably implicating an AMFR/gp78-containing ubiquitin ligase complex. Involved in regulation of cellular cholesterol homeostasis by regulation the SREBP signaling pathway. May promote ER retention of the SCAP-SREBF complex. This Mus musculus (Mouse) protein is Erlin-2 (Erlin2).